A 149-amino-acid chain; its full sequence is Large ribosomal subunit protein bL9 (149 aa).

Belongs to the bacterial ribosomal protein bL9 family.

Its function is as follows. Binds to the 23S rRNA. The protein is Large ribosomal subunit protein bL9 of Aquifex aeolicus (strain VF5).